A 169-amino-acid polypeptide reads, in one-letter code: Dihydrofolate reductase type 8 (169 aa).

A DHFR domain is found at 3–169; the sequence is ELHAILAATA…FTYRKKELTE (167 aa).

This sequence belongs to the dihydrofolate reductase family. In terms of assembly, homodimer.

It carries out the reaction (6S)-5,6,7,8-tetrahydrofolate + NADP(+) = 7,8-dihydrofolate + NADPH + H(+). It participates in cofactor biosynthesis; tetrahydrofolate biosynthesis; 5,6,7,8-tetrahydrofolate from 7,8-dihydrofolate: step 1/1. Functionally, key enzyme in folate metabolism. Catalyzes an essential reaction for de novo glycine and purine synthesis, and for DNA precursor synthesis. The sequence is that of Dihydrofolate reductase type 8 (dhfrVIII) from Escherichia coli.